The primary structure comprises 473 residues: Photosystem II CP43 reaction center protein (473 aa).

Residues 1–14 (MKTLYSLRRFYHVE) constitute a propeptide that is removed on maturation. Thr-15 bears the N-acetylthreonine mark. Position 15 is a phosphothreonine (Thr-15). 5 helical membrane-spanning segments follow: residues 69-93 (LFEV…PHLA), 134-155 (LLGP…KDRN), 178-200 (KALY…RKIT), 255-275 (KPFA…LSYS), and 291-312 (WFNN…ASQA). [CaMn4O5] cluster is bound at residue Glu-367. The chain crosses the membrane as a helical span at residues 447-471 (RARAAAAGFEKGIDRDFEPVLSMTP).

It belongs to the PsbB/PsbC family. PsbC subfamily. As to quaternary structure, PSII is composed of 1 copy each of membrane proteins PsbA, PsbB, PsbC, PsbD, PsbE, PsbF, PsbH, PsbI, PsbJ, PsbK, PsbL, PsbM, PsbT, PsbX, PsbY, PsbZ, Psb30/Ycf12, at least 3 peripheral proteins of the oxygen-evolving complex and a large number of cofactors. It forms dimeric complexes. Binds multiple chlorophylls and provides some of the ligands for the Ca-4Mn-5O cluster of the oxygen-evolving complex. It may also provide a ligand for a Cl- that is required for oxygen evolution. PSII binds additional chlorophylls, carotenoids and specific lipids. is required as a cofactor.

Its subcellular location is the plastid. The protein resides in the chloroplast thylakoid membrane. One of the components of the core complex of photosystem II (PSII). It binds chlorophyll and helps catalyze the primary light-induced photochemical processes of PSII. PSII is a light-driven water:plastoquinone oxidoreductase, using light energy to abstract electrons from H(2)O, generating O(2) and a proton gradient subsequently used for ATP formation. This chain is Photosystem II CP43 reaction center protein, found in Chloranthus spicatus (Chulantree).